The chain runs to 228 residues: Ankyrin repeat domain-containing protein 46 (228 aa).

ANK repeat units follow at residues 11–40, 44–73, 77–103, and 107–138; these read QTNV…DPNI, RGRT…DLLA, QGNT…KIDI, and QGAT…EVKG. A helical membrane pass occupies residues 195 to 215; it reads VLLLIFVIALLSLGIAYYVSG.

The protein localises to the membrane. In Pongo abelii (Sumatran orangutan), this protein is Ankyrin repeat domain-containing protein 46 (ANKRD46).